The primary structure comprises 124 residues: Small ribosomal subunit protein bS6 (124 aa).

It belongs to the bacterial ribosomal protein bS6 family.

In terms of biological role, binds together with bS18 to 16S ribosomal RNA. The polypeptide is Small ribosomal subunit protein bS6 (Campylobacter lari (strain RM2100 / D67 / ATCC BAA-1060)).